A 218-amino-acid chain; its full sequence is Glutathione S-transferase class-mu 26 kDa isozyme 51 (218 aa).

The region spanning 2–83 (PAKLGYWKIR…YIADKHGMLG (82 aa)) is the GST N-terminal domain. Residues 7 to 8 (YW), 41 to 45 (WFGDK), 54 to 55 (NL), and 67 to 68 (QS) each bind glutathione. A GST C-terminal domain is found at 85–203 (TPEERARISM…ESEKFIKWPL (119 aa)). Tyrosine 111 is a substrate binding site.

Belongs to the GST superfamily. Mu family. In terms of assembly, homodimer.

Its subcellular location is the cytoplasm. It carries out the reaction RX + glutathione = an S-substituted glutathione + a halide anion + H(+). Functionally, conjugation of reduced glutathione to a wide number of exogenous and endogenous hydrophobic electrophiles. GST isoenzymes appear to play a central role in the parasite detoxification system. Other functions are also suspected including a role in increasing the solubility of haematin in the parasite gut. This is Glutathione S-transferase class-mu 26 kDa isozyme 51 from Fasciola hepatica (Liver fluke).